A 539-amino-acid polypeptide reads, in one-letter code: Sodium/hydrogen exchanger 9B2 (539 aa).

Residues 1 to 94 (MEDSLFSVDK…ACPPQGCFSL (94 aa)) lie on the Cytoplasmic side of the membrane. Residues 95 to 112 (AITNVTMVILIWAVVWSI) traverse the membrane as a helical segment. Topologically, residues 113–121 (TGPECLPGG) are extracellular. A helical transmembrane segment spans residues 122–141 (NLFGILALLFSAALGGKLIS). The Cytoplasmic segment spans residues 142 to 152 (LIKIPSLPPLP). A helical membrane pass occupies residues 153–169 (PLLGMLLAGFLIRNIPV). Residues 170–179 (ITDQVQIHHK) lie on the Extracellular side of the membrane. A helical membrane pass occupies residues 180–197 (WSAALRNIALAIILVRAG). At 198–208 (LGLDPKALRKL) the chain is on the cytoplasmic side. A helical membrane pass occupies residues 209 to 235 (KAVCLRLSFGPCVVESCTAAVVSHFIM). Topologically, residues 236–241 (GFPLTW) are extracellular. The chain crosses the membrane as a helical span at residues 242–250 (GFMLGFVLG). Over 251–278 (AVSPAVVVPSMLILQKEGFGVDKGIPTL) the chain is Cytoplasmic. Positions 252, 283, 286, and 287 each coordinate Na(+). A helical transmembrane segment spans residues 279–298 (LMAAGSFDDVLAITGFNTCL). The Extracellular segment spans residues 299-308 (GMAFSSGSTL). A helical transmembrane segment spans residues 309 to 332 (NTIVRGVLEVVVGIAAGLLFGFFL). Residues 333 to 347 (HYFPSKDQENLKGKR) are Cytoplasmic-facing. Residues 348–365 (SYLILALSVFAVFGSLYF) form a helical membrane-spanning segment. Residues 366 to 369 (GFPG) are Extracellular-facing. A helical membrane pass occupies residues 370 to 381 (SGGLCTLVMAFL). Residues 382 to 398 (AGIGWSTDKTVVEDIIA) are Cytoplasmic-facing. A helical transmembrane segment spans residues 399 to 419 (VSWDIFQPLLFGLIGAEISVA). Topologically, residues 420–425 (SLKPET) are extracellular. The chain crosses the membrane as a helical span at residues 426 to 448 (VGLCTATLIIALIIRICISFLMV). Residues 449-469 (CFSGFSLKEKIFISLAWMPKA) are Cytoplasmic-facing. A helical transmembrane segment spans residues 470-481 (TVQAAIGSVALD). Residues 482-494 (TARTLENKQFEDY) lie on the Extracellular side of the membrane. The chain crosses the membrane as a helical span at residues 495 to 517 (GMDVLTVAFLGILVTAPIGALVI). At 518–539 (GLTGPKMLEKSESRTVTEEGSV) the chain is on the cytoplasmic side.

Belongs to the monovalent cation:proton antiporter 1 (CPA1) transporter (TC 2.A.36) family. In terms of assembly, homodimer; dimerization is essential for SLC9B2 activity. Lipids seem to play a role in the stabilization of the dimerization subdomain.

The protein resides in the cell membrane. It is found in the mitochondrion membrane. It localises to the endosome membrane. The protein localises to the recycling endosome membrane. Its subcellular location is the cytoplasmic vesicle. The protein resides in the secretory vesicle. It is found in the synaptic vesicle membrane. It localises to the basolateral cell membrane. The protein localises to the apical cell membrane. The catalysed reaction is Li(+)(out) + H(+)(in) = Li(+)(in) + H(+)(out). The enzyme catalyses Li(+)(in) + Na(+)(out) = Li(+)(out) + Na(+)(in). It catalyses the reaction Na(+)(in) + H(+)(out) = Na(+)(out) + H(+)(in). Allosterically inhibited by the N-terminal domain. Inhibited by phloretin. In terms of biological role, electroneutral Na(+) Li(+)/H(+) antiporter that extrudes Na(+) or Li(+) in exchange for external protons across the membrane. Uses the proton gradient/membrane potential to extrude sodium. Contributes to the regulation of intracellular pH and sodium homeostasis. Also able to mediate Na(+)/Li(+) antiporter activity in kidney. This chain is Sodium/hydrogen exchanger 9B2 (slc9b2), found in Xenopus tropicalis (Western clawed frog).